The following is a 701-amino-acid chain: Ribosomal RNA large subunit methyltransferase K/L (701 aa).

Positions 43-155 constitute a THUMP domain; the sequence is LLYKSLMWSR…NNILHIMLDL (113 aa).

The protein belongs to the methyltransferase superfamily. RlmKL family.

The protein resides in the cytoplasm. It carries out the reaction guanosine(2445) in 23S rRNA + S-adenosyl-L-methionine = N(2)-methylguanosine(2445) in 23S rRNA + S-adenosyl-L-homocysteine + H(+). The enzyme catalyses guanosine(2069) in 23S rRNA + S-adenosyl-L-methionine = N(2)-methylguanosine(2069) in 23S rRNA + S-adenosyl-L-homocysteine + H(+). Specifically methylates the guanine in position 2445 (m2G2445) and the guanine in position 2069 (m7G2069) of 23S rRNA. This is Ribosomal RNA large subunit methyltransferase K/L from Buchnera aphidicola subsp. Acyrthosiphon pisum (strain APS) (Acyrthosiphon pisum symbiotic bacterium).